We begin with the raw amino-acid sequence, 506 residues long: Maturase K (506 aa).

This sequence belongs to the intron maturase 2 family. MatK subfamily.

The protein resides in the plastid. Its subcellular location is the chloroplast. Usually encoded in the trnK tRNA gene intron. Probably assists in splicing its own and other chloroplast group II introns. The chain is Maturase K from Calluna vulgaris (Heather).